We begin with the raw amino-acid sequence, 234 residues long: Sperm-associated microtubule inner protein 5 (234 aa).

Microtubule inner protein component of sperm flagellar doublet microtubules. Expressed in testis (at protein level). Strongly expressed in peritubular cells and Leydig cells and weakly expressed in the cytoplasm of spermatocytes.

It is found in the cytoplasm. The protein resides in the cytoskeleton. The protein localises to the flagellum axoneme. It localises to the nucleus. In terms of biological role, microtubule inner protein (MIP) part of the dynein-decorated doublet microtubules (DMTs) in flagellum axoneme. May serve to reinforce and thus stabilize the microtubule structure in the sperm flagella. The protein is Sperm-associated microtubule inner protein 5 of Homo sapiens (Human).